The sequence spans 107 residues: V-type proton ATPase subunit G (107 aa).

The protein belongs to the V-ATPase G subunit family. V-ATPase is a heteromultimeric enzyme composed of a peripheral catalytic V1 complex (components A to H) attached to an integral membrane V0 proton pore complex (components: a, c, c', c'' and d).

In terms of biological role, catalytic subunit of the peripheral V1 complex of vacuolar ATPase (V-ATPase). V-ATPase is responsible for acidifying a variety of intracellular compartments in eukaryotic cells. This Dictyostelium discoideum (Social amoeba) protein is V-type proton ATPase subunit G (atp6v1g).